Consider the following 417-residue polypeptide: Tyrosine--tRNA ligase (417 aa).

Position 39 (Tyr-39) interacts with L-tyrosine. The short motif at 44 to 53 (CTARSLHIGN) is the 'HIGH' region element. Residues Tyr-176 and Gln-180 each contribute to the L-tyrosine site. The 'KMSKS' region signature appears at 236–240 (KMGKT). ATP is bound at residue Lys-239. The region spanning 350–417 (FGVLNAFVKA…KKKHILIKPA (68 aa)) is the S4 RNA-binding domain.

This sequence belongs to the class-I aminoacyl-tRNA synthetase family. TyrS type 1 subfamily. As to quaternary structure, homodimer.

The protein localises to the cytoplasm. The enzyme catalyses tRNA(Tyr) + L-tyrosine + ATP = L-tyrosyl-tRNA(Tyr) + AMP + diphosphate + H(+). In terms of biological role, catalyzes the attachment of tyrosine to tRNA(Tyr) in a two-step reaction: tyrosine is first activated by ATP to form Tyr-AMP and then transferred to the acceptor end of tRNA(Tyr). This is Tyrosine--tRNA ligase from Bradyrhizobium diazoefficiens (strain JCM 10833 / BCRC 13528 / IAM 13628 / NBRC 14792 / USDA 110).